The following is a 95-amino-acid chain: Small ribosomal subunit protein bS6 (95 aa).

It belongs to the bacterial ribosomal protein bS6 family.

Its function is as follows. Binds together with bS18 to 16S ribosomal RNA. This is Small ribosomal subunit protein bS6 from Clostridium novyi (strain NT).